Here is a 137-residue protein sequence, read N- to C-terminus: Basic phospholipase A2 beta-bungarotoxin A-AL4 chain (137 aa).

An N-terminal signal peptide occupies residues 1 to 10 (LAVCVSLLGA). Positions 11–18 (ANIPPQHL) are excised as a propeptide. Disulfide bonds link C45–C137, C47–C63, C62–C118, C69–C111, C79–C104, and C97–C109. Ca(2+)-binding residues include Y46, G48, and G50. The active site involves H66. D67 serves as a coordination point for Ca(2+). Residue D112 is part of the active site.

This sequence belongs to the phospholipase A2 family. Group I subfamily. D49 sub-subfamily. Heterodimer; disulfide-linked. The A chains have phospholipase A2 activity and the B chains show homology with the basic protease inhibitors. The cofactor is Ca(2+). As to expression, expressed by the venom gland.

It localises to the secreted. The catalysed reaction is a 1,2-diacyl-sn-glycero-3-phosphocholine + H2O = a 1-acyl-sn-glycero-3-phosphocholine + a fatty acid + H(+). In terms of biological role, snake venom phospholipase A2 (PLA2) that inhibits neuromuscular transmission by blocking acetylcholine release from the nerve termini. PLA2 catalyzes the calcium-dependent hydrolysis of the 2-acyl groups in 3-sn-phosphoglycerides. In Bungarus multicinctus (Many-banded krait), this protein is Basic phospholipase A2 beta-bungarotoxin A-AL4 chain.